The sequence spans 146 residues: MIFEVKSPILGFESVAKMKLEKIDDLFMKLYNAEGEVPHFTLVNPFLLREYEFDVPASIKILLDLSDAKNLLIANIMVIQQPIENSTINFLAPLIFNFDNLTMAQVVLDSTQYPLYSLNEPIGKYYDKEEAQKGEQAAPVRDSQKK.

Belongs to the FliW family. As to quaternary structure, interacts with translational regulator CsrA and flagellin(s).

The protein resides in the cytoplasm. Acts as an anti-CsrA protein, binds CsrA and prevents it from repressing translation of its target genes, one of which is flagellin. Binds to flagellin and participates in the assembly of the flagellum. The polypeptide is Flagellar assembly factor FliW 1 (Helicobacter hepaticus (strain ATCC 51449 / 3B1)).